Here is a 233-residue protein sequence, read N- to C-terminus: Demethylmenaquinone methyltransferase (233 aa).

S-adenosyl-L-methionine contacts are provided by residues threonine 58, aspartate 79, and 106-107 (NA).

Belongs to the class I-like SAM-binding methyltransferase superfamily. MenG/UbiE family.

The enzyme catalyses a 2-demethylmenaquinol + S-adenosyl-L-methionine = a menaquinol + S-adenosyl-L-homocysteine + H(+). Its pathway is quinol/quinone metabolism; menaquinone biosynthesis; menaquinol from 1,4-dihydroxy-2-naphthoate: step 2/2. Methyltransferase required for the conversion of demethylmenaquinol (DMKH2) to menaquinol (MKH2). The chain is Demethylmenaquinone methyltransferase from Bacillus velezensis (strain DSM 23117 / BGSC 10A6 / LMG 26770 / FZB42) (Bacillus amyloliquefaciens subsp. plantarum).